We begin with the raw amino-acid sequence, 360 residues long: GTPase Obg (360 aa).

One can recognise an Obg domain in the interval 1-156; the sequence is MFVDSVEIII…KCVRLELKLI (156 aa). Residues 157 to 360 form the OBG-type G domain; the sequence is ADIGLVGFPN…LKFVLLKALP (204 aa). GTP-binding positions include 163–170, 188–192, 210–213, 279–282, and 341–343; these read GFPNAGKS, FTTLV, DIPG, NKCD, and SAV. Mg(2+)-binding residues include serine 170 and threonine 190.

The protein belongs to the TRAFAC class OBG-HflX-like GTPase superfamily. OBG GTPase family. In terms of assembly, monomer. Mg(2+) is required as a cofactor.

It is found in the cytoplasm. An essential GTPase which binds GTP, GDP and possibly (p)ppGpp with moderate affinity, with high nucleotide exchange rates and a fairly low GTP hydrolysis rate. Plays a role in control of the cell cycle, stress response, ribosome biogenesis and in those bacteria that undergo differentiation, in morphogenesis control. This Helicobacter pylori (strain G27) protein is GTPase Obg.